Here is a 319-residue protein sequence, read N- to C-terminus: Probable ABC transporter permease protein MG189 homolog (319 aa).

Transmembrane regions (helical) follow at residues 41-61 (VVLCFFGLMVIFPFYLMLVVA), 98-118 (AIWINSLVTILSIILRLFFTV), 134-154 (LFWFIFLAVLILPESALLIGQ), 169-189 (PAIILGLTMPFVASVFSGFMF), 229-249 (TVSILTAFAAWNSYLWPLLLL), and 282-302 (NLKMAAAILAILPMFIVYFLF). The ABC transmembrane type-1 domain occupies 99 to 302 (IWINSLVTIL…LPMFIVYFLF (204 aa)).

This sequence belongs to the binding-protein-dependent transport system permease family. MalFG subfamily.

The protein localises to the cell membrane. Its function is as follows. Probably part of a binding-protein-dependent transport system. Probably responsible for the translocation of the substrate across the membrane. This chain is Probable ABC transporter permease protein MG189 homolog, found in Mycoplasma pneumoniae (strain ATCC 29342 / M129 / Subtype 1) (Mycoplasmoides pneumoniae).